We begin with the raw amino-acid sequence, 362 residues long: 3-isopropylmalate dehydrogenase (362 aa).

77–88 serves as a coordination point for NAD(+); the sequence is GPKWGTGAVRPE. The substrate site is built by Arg95, Arg105, Arg134, and Asp223. Residues Asp223, Asp248, and Asp252 each coordinate Mg(2+). 287–298 contributes to the NAD(+) binding site; that stretch reads GSAPDLPANKVN.

It belongs to the isocitrate and isopropylmalate dehydrogenases family. Homodimer. Mg(2+) is required as a cofactor. The cofactor is Mn(2+).

The protein resides in the cytoplasm. It catalyses the reaction (2R,3S)-3-isopropylmalate + NAD(+) = 4-methyl-2-oxopentanoate + CO2 + NADH. It functions in the pathway amino-acid biosynthesis; L-leucine biosynthesis; L-leucine from 3-methyl-2-oxobutanoate: step 3/4. In terms of biological role, catalyzes the oxidation of 3-carboxy-2-hydroxy-4-methylpentanoate (3-isopropylmalate) to 3-carboxy-4-methyl-2-oxopentanoate. The product decarboxylates to 4-methyl-2 oxopentanoate. This Kluyveromyces lactis (strain ATCC 8585 / CBS 2359 / DSM 70799 / NBRC 1267 / NRRL Y-1140 / WM37) (Yeast) protein is 3-isopropylmalate dehydrogenase (LEU2).